The primary structure comprises 438 residues: Choline monooxygenase, chloroplastic (438 aa).

Residues 1 to 58 (MAASATTMLLKYPTTVCGIPNSSANNSTDPSNNIVQIPQTTTTNSPLLKFRTPNKPVN) constitute a chloroplast transit peptide. Residues 121–228 (WQVAGYSDQV…VAVWGPFILI (108 aa)) enclose the Rieske domain. Residues C163, H165, C182, and H185 each coordinate [2Fe-2S] cluster. Fe cation-binding residues include H288 and H293.

It belongs to the choline monooxygenase family. It depends on [2Fe-2S] cluster as a cofactor. Requires Fe cation as cofactor. The cofactor is Mg(2+). In terms of tissue distribution, expressed in roots and leaves.

The protein localises to the plastid. Its subcellular location is the chloroplast stroma. It carries out the reaction choline + 2 reduced [2Fe-2S]-[ferredoxin] + O2 + 2 H(+) = betaine aldehyde hydrate + 2 oxidized [2Fe-2S]-[ferredoxin] + H2O. The protein operates within amine and polyamine biosynthesis; betaine biosynthesis via choline pathway; betaine aldehyde from choline (monooxygenase route): step 1/1. Functionally, catalyzes the first step of the osmoprotectant glycine betaine synthesis. The polypeptide is Choline monooxygenase, chloroplastic (CMO) (Atriplex hortensis (Mountain spinach)).